A 478-amino-acid polypeptide reads, in one-letter code: Transcription factor PIF1 (478 aa).

Residue threonine 10 is modified to Phosphothreonine; by CK2. 5 disordered regions span residues 56–80 (LHTK…QPSS), 122–144 (VSQV…PVRN), 172–210 (VRES…GGGA), 230–294 (TSSS…LSER), and 391–478 (TQTH…HTTG). The span at 69 to 80 (LPSMDPQQQPSS) shows a compositional bias: low complexity. A compositionally biased stretch (low complexity) spans 179–189 (SPSATPSAAAS). Threonine 197 carries the post-translational modification Phosphothreonine; by CK2. A Phosphoserine; by CK2 modification is found at serine 202. 2 stretches are compositionally biased toward basic and acidic residues: residues 238–272 (SEIE…ETKQ) and 284–294 (RAAEVHNLSER). The region spanning 284–333 (RAAEVHNLSERKRRDRINERMKALQELIPRCNKSDKASMLDEAIEYMKSL) is the bHLH domain. Polar residues predominate over residues 415–426 (PNQQYDPTSGQP). Phosphoserine; by CK2 is present on residues serine 464, serine 465, serine 466, and serine 469. Positions 465–478 (SSKESEDHGNHTTG) are enriched in basic and acidic residues.

In terms of assembly, homodimer. Interacts with the photoactivated conformer (Pfr) of phytochromes A and B, PHYA and PHYB. Also interacts with APRR1/TOC1. Binds to RGL2, RGA and FHY3 (via N-terminus). Associates to PTAC12/HMR/PAP5 which acts as a transcriptional coactivator. Binds directly to PCH1 and PCHL; this interaction facilitates its association with phyB and its subsequent light-induced degradation. In terms of processing, phosphorylated at Thr-10, Thr-197, Ser-202, Ser-464, Ser-465, Ser-466 and Ser-469 by CK2. Phosphorylated and ubiquitinated after an exposure to light (especially red and far-red), in a phytochrome-dependent manner. Modified proteins undergo a proteasome-dependent degradation. Its stability and degradation plays a central role in photomorphogenesis of seedlings. Mainly expressed in leaves, stems and seedlings, and, to a lower extent, in fruits, flowers and roots.

The protein localises to the nucleus. DNA-binding ability is inhibited by PCH1 and PCHL to negatively regulate the expressions of its target genes. Transcription activator. Negatively regulates chlorophyll biosynthesis and seed germination in the dark, and lightinduced degradation of PIF1 relieves this negative regulation to promote photomorphogenesis. Binds to the G-box motif (5'-CACGTG-3') found in many light-regulated promoters. Promotes the expression of SOM, and thus modulates responses to abscisic acid (ABA) and gibberellic acid (GA). The sequence is that of Transcription factor PIF1 from Arabidopsis thaliana (Mouse-ear cress).